Here is a 302-residue protein sequence, read N- to C-terminus: Syntaxin-17 (302 aa).

S2 carries the post-translational modification N-acetylserine. Topologically, residues 2 to 228 (SEDEEKVKLR…KNLGKAAKYK (227 aa)) are cytoplasmic. K41 carries the N6-acetyllysine modification. A coiled-coil region spans residues 53 to 123 (EEHINAGRTV…EELKKQFNDE (71 aa)). Y157 carries the phosphotyrosine; by ABL1 modification. The 63-residue stretch at 162–224 (IPQDQNAAES…EEGTKNLGKA (63 aa)) folds into the t-SNARE coiled-coil homology domain. The helical transmembrane segment at 229–249 (LAALPVAGALIGGMVGGPIGL) threads the bilayer. The interval 229–275 (LAALPVAGALIGGMVGGPIGLLAGFKVAGIAAALGGGVLGFTGGKLI) is necessary and sufficient for localization to autophagosome. The Lumenal portion of the chain corresponds to 250 to 254 (LAGFK). A helical membrane pass occupies residues 255–275 (VAGIAAALGGGVLGFTGGKLI). Residues 276–302 (QRKKQKMMEKLTSSCPDLPSQTDKKCS) lie on the Cytoplasmic side of the membrane. Residue S289 is modified to Phosphoserine. The Endoplasmic reticulum retention signal signature appears at 299–302 (KKCS).

This sequence belongs to the syntaxin family. In terms of assembly, forms a SNARE complex composed of VAMP8, SNAP29 and STX17 involved in fusion of autophagosome with lysosome. Interacts with VAMP7 and VTI1B. Probably interacts with BET1, SCFD1 and SEC22B. Interacts with PTPN2 and ABL1; involved in STX17 phosphorylation. Interacts with COPB1. Interacts with TMED9 and TMED10; the interaction is direct. Interacts with ATG14. Interacts with RUBCNL/PACER; promoting targeting of RUBCNL/PACER to autophagosome. Interacts with VAMP8, SNAP29, VPS39 and VPS41; these interactions are increased in the absence of TMEM39A. Interacts with IRGM; promoting STX17 recruitment to autophagosomes. Interacts with ATG8 proteins GABARAP and MAP1LC3B. Interacts with RNF115; this interaction enhances STX17 stability which in turn promotes autophagosome maturation. Interacts with RAB39A (GTP-bound); the interaction promotes autophagosome-lysosome membrane fusion driven by STX17-SNAP29-VAMP8. Interacts with RAB39B; the interaction may promote a different fonction in autophagy as compared with RAB39A. (Microbial infection) The interactions with VAMP8, SNAP29 and VPS41 are decreased in presence of SARS coronavirus-2/SARS-CoV-2 ORF3A protein. Phosphorylated at Tyr-157 probably by ABL1. Dephosphorylation by PTPN2; regulates exit from the endoplasmic reticulum. In terms of processing, (Microbial infection) Cleaved by the L.pneumophila serine protease Lpg1137, impairing endoplasmic reticulum-mitochondria communication, leading to inhibit autophagy.

Its subcellular location is the endoplasmic reticulum membrane. The protein resides in the smooth endoplasmic reticulum membrane. It is found in the endoplasmic reticulum-Golgi intermediate compartment membrane. The protein localises to the cytoplasmic vesicle. It localises to the autophagosome membrane. Its subcellular location is the COPII-coated vesicle membrane. The protein resides in the cytoplasm. It is found in the cytosol. The protein localises to the mitochondrion membrane. It localises to the autolysosome membrane. Functionally, SNAREs, soluble N-ethylmaleimide-sensitive factor-attachment protein receptors, are essential proteins for fusion of cellular membranes. SNAREs localized on opposing membranes assemble to form a trans-SNARE complex, an extended, parallel four alpha-helical bundle that drives membrane fusion. STX17 is a SNARE of the autophagosome involved in autophagy through the direct control of autophagosome membrane fusion with the lysosome membrane. May also play a role in the early secretory pathway where it may maintain the architecture of the endoplasmic reticulum-Golgi intermediate compartment/ERGIC and Golgi and/or regulate transport between the endoplasmic reticulum, the ERGIC and the Golgi. The protein is Syntaxin-17 of Homo sapiens (Human).